Here is a 208-residue protein sequence, read N- to C-terminus: Putative ankyrin repeat protein Ta0196 (208 aa).

ANK repeat units lie at residues 49-78, 82-111, 115-144, and 148-177; these read YQRN…HIDD, EGNT…SIDI, AGNT…NINI, and EGDT…DLNA.

The sequence is that of Putative ankyrin repeat protein Ta0196 from Thermoplasma acidophilum (strain ATCC 25905 / DSM 1728 / JCM 9062 / NBRC 15155 / AMRC-C165).